A 1165-amino-acid polypeptide reads, in one-letter code: DNA-directed RNA polymerase subunit beta (1165 aa).

It belongs to the RNA polymerase beta chain family. The RNAP catalytic core consists of 2 alpha, 1 beta, 1 beta' and 1 omega subunit. When a sigma factor is associated with the core the holoenzyme is formed, which can initiate transcription.

The enzyme catalyses RNA(n) + a ribonucleoside 5'-triphosphate = RNA(n+1) + diphosphate. Functionally, DNA-dependent RNA polymerase catalyzes the transcription of DNA into RNA using the four ribonucleoside triphosphates as substrates. This is DNA-directed RNA polymerase subunit beta from Corynebacterium glutamicum (strain R).